The sequence spans 40 residues: Large ribosomal subunit protein bL36B (40 aa).

The protein belongs to the bacterial ribosomal protein bL36 family.

In Streptomyces coelicolor (strain ATCC BAA-471 / A3(2) / M145), this protein is Large ribosomal subunit protein bL36B.